The following is a 238-amino-acid chain: NEDD4-binding protein 2-like 1 (238 aa).

2 disordered regions span residues 1 to 36 (MEDSFLESFGRLSLQQRQQQPPPRPPPARGPPPRRH) and 183 to 212 (VLHAEKPSRANRNQGRNSEPSSGSGYWNTY). Residues 20 to 31 (QPPPRPPPARGP) are compositionally biased toward pro residues. Residues 192-212 (ANRNQGRNSEPSSGSGYWNTY) show a composition bias toward polar residues.

Interacts with dynactin subunit proteins, including DCTN4, DCTN5 and DCTN5.

Its function is as follows. Might play a role in adipocyte differentiation and triglyceride accumulation. This Mus musculus (Mouse) protein is NEDD4-binding protein 2-like 1 (N4bp2l1).